A 252-amino-acid polypeptide reads, in one-letter code: UPF0246 protein LJ_0535 (252 aa).

It belongs to the UPF0246 family.

The sequence is that of UPF0246 protein LJ_0535 from Lactobacillus johnsonii (strain CNCM I-12250 / La1 / NCC 533).